The primary structure comprises 306 residues: Bifunctional protein FolD (306 aa).

Residues 164–166, Ser-189, and Thr-230 each bind NADP(+); that span reads GRS.

Belongs to the tetrahydrofolate dehydrogenase/cyclohydrolase family. In terms of assembly, homodimer.

It carries out the reaction (6R)-5,10-methylene-5,6,7,8-tetrahydrofolate + NADP(+) = (6R)-5,10-methenyltetrahydrofolate + NADPH. The catalysed reaction is (6R)-5,10-methenyltetrahydrofolate + H2O = (6R)-10-formyltetrahydrofolate + H(+). It functions in the pathway one-carbon metabolism; tetrahydrofolate interconversion. Catalyzes the oxidation of 5,10-methylenetetrahydrofolate to 5,10-methenyltetrahydrofolate and then the hydrolysis of 5,10-methenyltetrahydrofolate to 10-formyltetrahydrofolate. The sequence is that of Bifunctional protein FolD from Solibacter usitatus (strain Ellin6076).